Here is a 358-residue protein sequence, read N- to C-terminus: Putative pyruvyl transferase EpsI (358 aa).

Belongs to the polysaccharide pyruvyl transferase family.

In terms of biological role, may be involved in the production of the exopolysaccharide (EPS) component of the extracellular matrix during biofilm formation. EPS is responsible for the adhesion of chains of cells into bundles. The sequence is that of Putative pyruvyl transferase EpsI (epsI) from Bacillus subtilis (strain 168).